Reading from the N-terminus, the 156-residue chain is MAKATFGAGCFWGVEASFRQLHGVQDVAAGYEGGKLDNPTYRDVCTDLTGHAEVVEIDFNPDEIRFEQLLEAFFGLHDPTQLNRQGPDWGTQYRSVIFYHSPEQQTVAQAFIDRLTAEKRFPRPIVTQVVPAATFWRAEEYHQRYLEKRGLATCHI.

Residue Cys-10 is part of the active site.

The protein belongs to the MsrA Met sulfoxide reductase family.

The catalysed reaction is L-methionyl-[protein] + [thioredoxin]-disulfide + H2O = L-methionyl-(S)-S-oxide-[protein] + [thioredoxin]-dithiol. It catalyses the reaction [thioredoxin]-disulfide + L-methionine + H2O = L-methionine (S)-S-oxide + [thioredoxin]-dithiol. In terms of biological role, has an important function as a repair enzyme for proteins that have been inactivated by oxidation. Catalyzes the reversible oxidation-reduction of methionine sulfoxide in proteins to methionine. This Acidobacterium capsulatum (strain ATCC 51196 / DSM 11244 / BCRC 80197 / JCM 7670 / NBRC 15755 / NCIMB 13165 / 161) protein is Peptide methionine sulfoxide reductase MsrA.